The chain runs to 201 residues: Protease (201 aa).

Catalysis depends on residues His56, Asp73, and Cys121.

Belongs to the peptidase C5 family. As to quaternary structure, interacts with protease cofactor pVI-C; this interaction is necessary for protease activation.

The protein resides in the virion. It localises to the host nucleus. The enzyme catalyses Cleaves proteins of the adenovirus and its host cell at two consensus sites: -Yaa-Xaa-Gly-Gly-|-Xaa- and -Yaa-Xaa-Gly-Xaa-|-Gly- (in which Yaa is Met, Ile or Leu, and Xaa is any amino acid).. Requires DNA and protease cofactor for maximal activation. Inside nascent virions, becomes partially activated by binding to the viral DNA, allowing it to cleave the cofactor that binds to the protease and fully activates it. Actin, like the viral protease cofactor, seems to act as a cofactor in the cleavage of cytokeratin 18 and of actin itself. Cleaves viral precursor proteins (pTP, pIIIa, pVI, pVII, pVIII, and pX) inside newly assembled particles giving rise to mature virions. Protease complexed to its cofactor slides along the viral DNA to specifically locate and cleave the viral precursors. Mature virions have a weakened organization compared to the unmature virions, thereby facilitating subsequent uncoating. Without maturation, the particle lacks infectivity and is unable to uncoat. Late in adenovirus infection, in the cytoplasm, may participate in the cytoskeleton destruction. Cleaves host cell cytoskeletal keratins K7 and K18. The polypeptide is Protease (Homo sapiens (Human)).